A 495-amino-acid chain; its full sequence is Maturase K (495 aa).

Belongs to the intron maturase 2 family. MatK subfamily.

Its subcellular location is the plastid. It localises to the chloroplast. Its function is as follows. Usually encoded in the trnK tRNA gene intron. Probably assists in splicing its own and other chloroplast group II introns. The sequence is that of Maturase K from Torreya californica (California nutmeg).